We begin with the raw amino-acid sequence, 644 residues long: DNA mismatch repair protein MutL (644 aa).

2 disordered regions span residues 353–399 and 420–440; these read SESG…SQLT and GSMA…RARA. Residues 370–381 show a composition bias toward polar residues; it reads SPESKTHSTWNE. Over residues 383–399 the composition is skewed to basic and acidic residues; that stretch reads SRVDTSRVEISRDSQLT.

It belongs to the DNA mismatch repair MutL/HexB family.

Its function is as follows. This protein is involved in the repair of mismatches in DNA. It is required for dam-dependent methyl-directed DNA mismatch repair. May act as a 'molecular matchmaker', a protein that promotes the formation of a stable complex between two or more DNA-binding proteins in an ATP-dependent manner without itself being part of a final effector complex. The protein is DNA mismatch repair protein MutL of Shewanella sp. (strain MR-4).